We begin with the raw amino-acid sequence, 181 residues long: Large ribosomal subunit protein uL5c (181 aa).

This sequence belongs to the universal ribosomal protein uL5 family. As to quaternary structure, part of the 50S ribosomal subunit; contacts the 5S rRNA.

Its subcellular location is the plastid. The protein resides in the chloroplast. Functionally, binds 5S rRNA, forms part of the central protuberance of the 50S subunit. The protein is Large ribosomal subunit protein uL5c (rpl5) of Pyropia yezoensis (Susabi-nori).